Consider the following 352-residue polypeptide: Protein RecA (352 aa).

67-74 (GPESSGKT) is a binding site for ATP.

This sequence belongs to the RecA family.

The protein resides in the cytoplasm. In terms of biological role, can catalyze the hydrolysis of ATP in the presence of single-stranded DNA, the ATP-dependent uptake of single-stranded DNA by duplex DNA, and the ATP-dependent hybridization of homologous single-stranded DNAs. It interacts with LexA causing its activation and leading to its autocatalytic cleavage. The polypeptide is Protein RecA (Enterobacter sp. (strain 638)).